A 446-amino-acid chain; its full sequence is Eukaryotic translation initiation factor 3 subunit E (446 aa).

One can recognise a PCI domain in the interval 240–420; it reads PLFNDENSRE…GTVVMNHPNS (181 aa).

Belongs to the eIF-3 subunit E family. As to quaternary structure, component of the eukaryotic translation initiation factor 3 (eIF-3) complex.

The protein resides in the cytoplasm. Functionally, component of the eukaryotic translation initiation factor 3 (eIF-3) complex, which is involved in protein synthesis of a specialized repertoire of mRNAs and, together with other initiation factors, stimulates binding of mRNA and methionyl-tRNAi to the 40S ribosome. The eIF-3 complex specifically targets and initiates translation of a subset of mRNAs involved in cell proliferation. The sequence is that of Eukaryotic translation initiation factor 3 subunit E from Pyricularia oryzae (strain 70-15 / ATCC MYA-4617 / FGSC 8958) (Rice blast fungus).